The primary structure comprises 121 residues: Large ribosomal subunit protein eL18 (121 aa).

The protein belongs to the eukaryotic ribosomal protein eL18 family.

The protein is Large ribosomal subunit protein eL18 of Methanospirillum hungatei JF-1 (strain ATCC 27890 / DSM 864 / NBRC 100397 / JF-1).